A 196-amino-acid polypeptide reads, in one-letter code: Peptidyl-tRNA hydrolase (196 aa).

Tyrosine 16 contacts tRNA. The active-site Proton acceptor is histidine 21. 3 residues coordinate tRNA: phenylalanine 67, asparagine 69, and asparagine 115.

Belongs to the PTH family. As to quaternary structure, monomer.

It localises to the cytoplasm. It carries out the reaction an N-acyl-L-alpha-aminoacyl-tRNA + H2O = an N-acyl-L-amino acid + a tRNA + H(+). Functionally, hydrolyzes ribosome-free peptidyl-tRNAs (with 1 or more amino acids incorporated), which drop off the ribosome during protein synthesis, or as a result of ribosome stalling. Catalyzes the release of premature peptidyl moieties from peptidyl-tRNA molecules trapped in stalled 50S ribosomal subunits, and thus maintains levels of free tRNAs and 50S ribosomes. This Edwardsiella ictaluri (strain 93-146) protein is Peptidyl-tRNA hydrolase.